The chain runs to 373 residues: Chaperone protein DnaJ (373 aa).

The 66-residue stretch at 4 to 69 (SYYEILEITQ…EKRAIYDRYG (66 aa)) folds into the J domain. Residues 135 to 212 (GCKKNIDFTY…CKGLGYNESK (78 aa)) form a CR-type zinc finger. Residues Cys148, Cys151, Cys164, Cys167, Cys186, Cys189, Cys200, and Cys203 each coordinate Zn(2+). CXXCXGXG motif repeat units follow at residues 148–155 (CKTCNGTG), 164–171 (CPKCQGRG), 186–193 (CPDCQGIG), and 200–207 (CSDCKGLG).

This sequence belongs to the DnaJ family. As to quaternary structure, homodimer. Requires Zn(2+) as cofactor.

Its subcellular location is the cytoplasm. Its function is as follows. Participates actively in the response to hyperosmotic and heat shock by preventing the aggregation of stress-denatured proteins and by disaggregating proteins, also in an autonomous, DnaK-independent fashion. Unfolded proteins bind initially to DnaJ; upon interaction with the DnaJ-bound protein, DnaK hydrolyzes its bound ATP, resulting in the formation of a stable complex. GrpE releases ADP from DnaK; ATP binding to DnaK triggers the release of the substrate protein, thus completing the reaction cycle. Several rounds of ATP-dependent interactions between DnaJ, DnaK and GrpE are required for fully efficient folding. Also involved, together with DnaK and GrpE, in the DNA replication of plasmids through activation of initiation proteins. The sequence is that of Chaperone protein DnaJ from Campylobacter jejuni (strain RM1221).